Here is a 94-residue protein sequence, read N- to C-terminus: Trp operon repressor homolog (94 aa).

Residues 58–81 (QREIAEKYGVSIAQITRGSNALKG) mediate DNA binding.

It belongs to the TrpR family. Homodimer.

It localises to the cytoplasm. Functionally, this protein is an aporepressor. When complexed with L-tryptophan it binds the operator region of the trp operon and prevents the initiation of transcription. In Chlamydia trachomatis serovar L2 (strain ATCC VR-902B / DSM 19102 / 434/Bu), this protein is Trp operon repressor homolog.